The following is a 122-amino-acid chain: MIQKETNLVVADNSGAKKVRCIHVFGGTGRRYASLGDQVIVSVKAAVPGGVVKKKEVCKAVVVRCVKEQRRKDGSYIRFDENAVVLLNAQGEPRGTRIFGPVARELRDRRYMKIVSLAPEVL.

The protein belongs to the universal ribosomal protein uL14 family. As to quaternary structure, part of the 50S ribosomal subunit. Forms a cluster with proteins L3 and L19. In the 70S ribosome, L14 and L19 interact and together make contacts with the 16S rRNA in bridges B5 and B8.

Binds to 23S rRNA. Forms part of two intersubunit bridges in the 70S ribosome. This Chlorobium luteolum (strain DSM 273 / BCRC 81028 / 2530) (Pelodictyon luteolum) protein is Large ribosomal subunit protein uL14.